A 113-amino-acid chain; its full sequence is U11-theraphotoxin-Hhn1a (113 aa).

The signal sequence occupies residues 1–21 (MNTVRVAFLLVFVLAVSLGQA). A propeptide spanning residues 22–74 (DKDENRMEMQEKTEQGKSYLDFAENLLLQKLEELEAKLLEEDSEESRNSRQKR) is cleaved from the precursor. A disordered region spans residues 61–83 (EEDSEESRNSRQKRCIGEGVPCD). 3 cysteine pairs are disulfide-bonded: cysteine 75/cysteine 90, cysteine 82/cysteine 95, and cysteine 89/cysteine 110.

The protein belongs to the neurotoxin 14 (magi-1) family. 01 (HNTX-16) subfamily. In terms of tissue distribution, expressed by the venom gland.

Its subcellular location is the secreted. Probable ion channel inhibitor. This chain is U11-theraphotoxin-Hhn1a, found in Cyriopagopus hainanus (Chinese bird spider).